Reading from the N-terminus, the 147-residue chain is Transcriptional regulator MraZ (147 aa).

SpoVT-AbrB domains follow at residues 5-52 (SHAI…PETE) and 81-124 (ATTL…SEEA).

The protein belongs to the MraZ family. Forms oligomers.

Its subcellular location is the cytoplasm. The protein localises to the nucleoid. The protein is Transcriptional regulator MraZ of Saccharophagus degradans (strain 2-40 / ATCC 43961 / DSM 17024).